Here is a 108-residue protein sequence, read N- to C-terminus: UPF0060 membrane protein YnfA (108 aa).

At 1 to 5 (MIKTT) the chain is on the periplasmic side. A helical membrane pass occupies residues 6–26 (LLFFATALCEIIGCFLPWLWL). Topologically, residues 27–30 (KRNA) are cytoplasmic. The helical transmembrane segment at 31 to 51 (SIWLLLPAGISLALFVWLLTL) threads the bilayer. At 52 to 60 (HPAASGRVY) the chain is on the periplasmic side. A helical transmembrane segment spans residues 61–81 (AAYGGVYVCTALMWLRVVDGV). At 82–84 (KLS) the chain is on the cytoplasmic side. Residues 85 to 105 (LYDWTGALIALCGMLIIVAGW) form a helical membrane-spanning segment. Over 106 to 108 (GRT) the chain is Periplasmic.

It belongs to the UPF0060 family.

It localises to the cell inner membrane. The sequence is that of UPF0060 membrane protein YnfA from Shigella flexneri serotype 5b (strain 8401).